The sequence spans 432 residues: Gamma-glutamyl phosphate reductase (432 aa).

This sequence belongs to the gamma-glutamyl phosphate reductase family.

The protein localises to the cytoplasm. The catalysed reaction is L-glutamate 5-semialdehyde + phosphate + NADP(+) = L-glutamyl 5-phosphate + NADPH + H(+). It participates in amino-acid biosynthesis; L-proline biosynthesis; L-glutamate 5-semialdehyde from L-glutamate: step 2/2. Functionally, catalyzes the NADPH-dependent reduction of L-glutamate 5-phosphate into L-glutamate 5-semialdehyde and phosphate. The product spontaneously undergoes cyclization to form 1-pyrroline-5-carboxylate. The chain is Gamma-glutamyl phosphate reductase from Brachyspira hyodysenteriae (strain ATCC 49526 / WA1).